Here is an 864-residue protein sequence, read N- to C-terminus: Valine--tRNA ligase (864 aa).

The 'HIGH' region signature appears at 42 to 52; it reads PTISGKLHIGH. Positions 589 to 593 match the 'KMSKS' region motif; that stretch reads KMSKS. Residue lysine 592 coordinates ATP.

Belongs to the class-I aminoacyl-tRNA synthetase family. ValS type 2 subfamily. Monomer.

Its subcellular location is the cytoplasm. The enzyme catalyses tRNA(Val) + L-valine + ATP = L-valyl-tRNA(Val) + AMP + diphosphate. In terms of biological role, catalyzes the attachment of valine to tRNA(Val). As ValRS can inadvertently accommodate and process structurally similar amino acids such as threonine, to avoid such errors, it has a 'posttransfer' editing activity that hydrolyzes mischarged Thr-tRNA(Val) in a tRNA-dependent manner. In Wolbachia pipientis wMel, this protein is Valine--tRNA ligase.